Consider the following 233-residue polypeptide: MSTEAETTSAAAPAPAPAPASAPARCQRIGCDATFTDDNNPDGSCQYHPSGPMFHDGMKQWSCCKQKSHDFSLFLAIPGCKTGKHTTEKPITKAVPTKPSKAVPVQTSKQSVGADTCSRCRQGFFCSDHGSQPKAQIPTATSDTNMVPVEKPAVPPPKKKIDLNEPRVCKNKGCGKTYKEKDNHDEACDYHPGPAVFRDRIRGWKCCDIHVKEFDEFMEIPPCTKGWHNADAA.

Residues 1-13 (MSTEAETTSAAAP) are compositionally biased toward low complexity. The disordered stretch occupies residues 1-23 (MSTEAETTSAAAPAPAPAPASAP). Positions 26, 31, 45, 48, 63, 64, 80, and 85 each coordinate Zn(2+). The 60-residue stretch at 26–85 (CQRIGCDATFTDDNNPDGSCQYHPSGPMFHDGMKQWSCCKQKSHDFSLFLAIPGCKTGKH) folds into the CHORD 1 domain. The CCCH motif lies at 117–137 (CSRCRQGFFCSDHGSQPKAQI). Zn(2+) contacts are provided by Cys-169, Cys-174, Cys-188, His-191, Cys-206, Cys-207, Cys-223, and His-228. Residues 169-228 (CKNKGCGKTYKEKDNHDEACDYHPGPAVFRDRIRGWKCCDIHVKEFDEFMEIPPCTKGWH) form the CHORD 2 domain.

As to quaternary structure, interacts (via CHORD2 domain) with SGT1 (via CS domain). Interacts with RAC1 and RACK1A.

Its subcellular location is the cytoplasm. It is found in the nucleus. Functionally, involved in basal disease resistance to virulent strain of bacterial blight (X.oryzae) and compatible race of rice blast fungus (M.grisea). May act as positive regulator of basal defense. Associates with HSP90 and is essential for the pathogen-associated molecular pattern (PAMP)-triggered immune responses specifically enhanced by RAC1. This Oryza sativa subsp. japonica (Rice) protein is Cysteine and histidine-rich domain-containing protein RAR1 (RAR1).